We begin with the raw amino-acid sequence, 520 residues long: Tetratricopeptide repeat protein 6 (520 aa).

13 TPR repeats span residues 57–90 (MTMC…ISHS), 101–138 (ADCL…DKNS), 139–172 (YTAF…DATE), 176–209 (LNTF…SRTN), 210–243 (GSLC…NPCF), 245–280 (DAYV…NPAY), 281–314 (IKAR…DPKN), 320–347 (GRAV…ISTT), 348–381 (AEFL…NPKY), 382–415 (SLAY…DPEN), 416–449 (EYVL…CPFW), 450–483 (AAVY…KPND), and 484–517 (ALVY…EDYA).

This chain is Tetratricopeptide repeat protein 6, found in Homo sapiens (Human).